A 1333-amino-acid polypeptide reads, in one-letter code: Xanthine dehydrogenase/oxidase (1333 aa).

Residues Asp-4–Ile-91 form the 2Fe-2S ferredoxin-type domain. [2Fe-2S] cluster contacts are provided by Cys-43, Cys-48, Cys-51, Cys-73, Cys-113, Cys-116, Cys-148, and Cys-150. One can recognise an FAD-binding PCMH-type domain in the interval Phe-229–Glu-414. Residues Leu-257–Ile-264, Phe-337, Ser-347–Asn-351, Asp-360, Leu-404, and Lys-422 contribute to the FAD site. Cystine bridges form between Cys-509–Cys-1318 and Cys-536–Cys-993. Residues Gln-768 and Phe-799 each coordinate Mo-molybdopterin. Residues Glu-803 and Arg-881 each coordinate substrate. Arg-913 provides a ligand contact to Mo-molybdopterin. Positions 915 and 1011 each coordinate substrate. Residue Ala-1080 participates in Mo-molybdopterin binding. The active-site Proton acceptor is Glu-1262.

Belongs to the xanthine dehydrogenase family. In terms of assembly, homodimer. Interacts with BTN1A1. The cofactor is [2Fe-2S] cluster. Requires FAD as cofactor. Mo-molybdopterin is required as a cofactor. Subject to partial proteolysis; this alters the enzyme from the dehydrogenase form (D) to the oxidase form (O). Post-translationally, contains sulfhydryl groups that are easily oxidized (in vitro); this alters the enzyme from the dehydrogenase form (D) to the oxidase form (O). Detected in milk (at protein level).

It localises to the cytoplasm. The protein localises to the peroxisome. Its subcellular location is the secreted. It carries out the reaction xanthine + NAD(+) + H2O = urate + NADH + H(+). The enzyme catalyses hypoxanthine + NAD(+) + H2O = xanthine + NADH + H(+). It catalyses the reaction xanthine + O2 + H2O = urate + H2O2. Can be converted from the dehydrogenase form (D) to the oxidase form (O) irreversibly by proteolysis or reversibly through the oxidation of sulfhydryl groups. Its function is as follows. Key enzyme in purine degradation. Catalyzes the oxidation of hypoxanthine to xanthine. Catalyzes the oxidation of xanthine to uric acid. Contributes to the generation of reactive oxygen species. Has also low oxidase activity towards aldehydes (in vitro). This Homo sapiens (Human) protein is Xanthine dehydrogenase/oxidase (XDH).